A 359-amino-acid chain; its full sequence is HTH-type transcriptional regulator Rv3575c (359 aa).

Positions 9-64 constitute an HTH lacI-type domain; the sequence is ATLASLAAELKVSRTTVSNAFNRPDQLSADLRERVLATAKRLGYAGPDPVARSLRT. Positions 11-30 form a DNA-binding region, H-T-H motif; sequence LASLAAELKVSRTTVSNAFN.

In terms of biological role, transcriptional regulator that negatively regulates transcription of the mce4 operon, which is involved in cholesterol transport and utilization. Acts by binding to the promoter region of the mce4 operon. It affects the utilization of host cholesterol as a carbon source, impacting the host's innate immune response. This chain is HTH-type transcriptional regulator Rv3575c, found in Mycobacterium tuberculosis (strain ATCC 25618 / H37Rv).